The chain runs to 638 residues: Threonine--tRNA ligase (638 aa).

The region spanning 1-61 (MPVITLPDGS…SVDGKLQIIT (61 aa)) is the TGS domain. The segment at 243–534 (DHRKIGKTQD…LTEEYAGFFP (292 aa)) is catalytic. Positions 334, 385, and 511 each coordinate Zn(2+).

Belongs to the class-II aminoacyl-tRNA synthetase family. In terms of assembly, homodimer. It depends on Zn(2+) as a cofactor.

It localises to the cytoplasm. The enzyme catalyses tRNA(Thr) + L-threonine + ATP = L-threonyl-tRNA(Thr) + AMP + diphosphate + H(+). Catalyzes the attachment of threonine to tRNA(Thr) in a two-step reaction: L-threonine is first activated by ATP to form Thr-AMP and then transferred to the acceptor end of tRNA(Thr). Also edits incorrectly charged L-seryl-tRNA(Thr). In Hamiltonella defensa subsp. Acyrthosiphon pisum (strain 5AT), this protein is Threonine--tRNA ligase.